The primary structure comprises 63 residues: Sec-independent protein translocase protein TatA (63 aa).

The helical transmembrane segment at 1-21 threads the bilayer; the sequence is MGSFSMWHWLIVLVIVLLLFG. The interval 42–63 is disordered; sequence GMTDDDAPDTAKTVDHKADETK. The span at 53–63 shows a compositional bias: basic and acidic residues; it reads KTVDHKADETK.

This sequence belongs to the TatA/E family. The Tat system comprises two distinct complexes: a TatABC complex, containing multiple copies of TatA, TatB and TatC subunits, and a separate TatA complex, containing only TatA subunits. Substrates initially bind to the TatABC complex, which probably triggers association of the separate TatA complex to form the active translocon.

The protein localises to the cell inner membrane. Part of the twin-arginine translocation (Tat) system that transports large folded proteins containing a characteristic twin-arginine motif in their signal peptide across membranes. TatA could form the protein-conducting channel of the Tat system. The chain is Sec-independent protein translocase protein TatA from Rhizobium etli (strain CIAT 652).